Reading from the N-terminus, the 223-residue chain is Protein UGX2 (223 aa).

A compositionally biased stretch (basic residues) spans 78–95 (SNKRAKMKSKTKLTRTAK). Positions 78–117 (SNKRAKMKSKTKLTRTAKQRRESPVCERDESDEDNDSDHY) are disordered. A compositionally biased stretch (basic and acidic residues) spans 96-105 (QRRESPVCER).

The chain is Protein UGX2 (UGX2) from Saccharomyces cerevisiae (strain ATCC 204508 / S288c) (Baker's yeast).